A 337-amino-acid polypeptide reads, in one-letter code: Ribosomal RNA small subunit methyltransferase C (337 aa).

Belongs to the methyltransferase superfamily. RsmC family. Monomer.

The protein resides in the cytoplasm. The catalysed reaction is guanosine(1207) in 16S rRNA + S-adenosyl-L-methionine = N(2)-methylguanosine(1207) in 16S rRNA + S-adenosyl-L-homocysteine + H(+). Specifically methylates the guanine in position 1207 of 16S rRNA in the 30S particle. The polypeptide is Ribosomal RNA small subunit methyltransferase C (Acinetobacter baumannii (strain ATCC 17978 / DSM 105126 / CIP 53.77 / LMG 1025 / NCDC KC755 / 5377)).